The primary structure comprises 492 residues: Trigger factor (492 aa).

The interval 77–96 is disordered; sequence EILSSRGEKSATQPAISMTE. The region spanning 169–254 is the PPIase FKBP-type domain; that stretch reads GDRVTMNYLG…VKEVAAAAAV (86 aa). Residues 439 to 492 form a disordered region; it reads ELLADDGEEETETKKKAPAKKKAAAKADDAAEGEEAAPKKKAPAKKKATEADAE.

This sequence belongs to the FKBP-type PPIase family. Tig subfamily.

The protein resides in the cytoplasm. The enzyme catalyses [protein]-peptidylproline (omega=180) = [protein]-peptidylproline (omega=0). Its function is as follows. Involved in protein export. Acts as a chaperone by maintaining the newly synthesized protein in an open conformation. Functions as a peptidyl-prolyl cis-trans isomerase. This is Trigger factor from Agrobacterium fabrum (strain C58 / ATCC 33970) (Agrobacterium tumefaciens (strain C58)).